The chain runs to 426 residues: MLRVQQAKQIKGTVRVPGDKSISHRAVMFGALAEGTTTIEGFLPGADCLSTISCFRRMGIEIEQQGDAVTVQGKGWYGLQEPSQHLDVGNSGTTIRLMAGIMATQPFHVVMEGDESIAKRPMRRVIGPLRQMGAKIDGRKDGEYTPLSIRGGKLQGIAYQSPVASAQVKSAIMLAGLQAKGVTSVTEPHLSRDHTERMLQAFGVQVVRDGLTVSVEGGQKLKGRAISVPGDISSAAFLIAAVMVVPGSSLLIENVGINPSRTGIIDVVKAMGGSLELLNERIVNEEPVADLLVTHSELHGIEIAGDIIPRLIDEIPVIAVMATQAKGQTVIRDAEELKVKETDRIATVVSQLSKFGAKVTPTDDGMIIGGKTGLTGAIIDSMGDHRIGMAMAIAGLIAEGETKIENDEAIDVSFPGFHDLLVKISQ.

3-phosphoshikimate is bound by residues Lys-20, Ser-21, and Arg-25. Residue Lys-20 coordinates phosphoenolpyruvate. Gly-92 and Arg-120 together coordinate phosphoenolpyruvate. Residues Ser-165, Gln-167, Asp-313, and Lys-340 each contribute to the 3-phosphoshikimate site. Residue Gln-167 participates in phosphoenolpyruvate binding. The active-site Proton acceptor is the Asp-313. Arg-344 and Arg-386 together coordinate phosphoenolpyruvate.

The protein belongs to the EPSP synthase family. Monomer.

Its subcellular location is the cytoplasm. The catalysed reaction is 3-phosphoshikimate + phosphoenolpyruvate = 5-O-(1-carboxyvinyl)-3-phosphoshikimate + phosphate. It participates in metabolic intermediate biosynthesis; chorismate biosynthesis; chorismate from D-erythrose 4-phosphate and phosphoenolpyruvate: step 6/7. Its function is as follows. Catalyzes the transfer of the enolpyruvyl moiety of phosphoenolpyruvate (PEP) to the 5-hydroxyl of shikimate-3-phosphate (S3P) to produce enolpyruvyl shikimate-3-phosphate and inorganic phosphate. The sequence is that of 3-phosphoshikimate 1-carboxyvinyltransferase from Brevibacillus brevis (strain 47 / JCM 6285 / NBRC 100599).